A 1030-amino-acid polypeptide reads, in one-letter code: Tricorn protease (1030 aa).

The six-bladed beta propeller stretch occupies residues 1-270 (MANLLQNPDI…DNVKSLDIGP (270 aa)). A binds the substrate's C-terminus region spans residues 93-94 (RR). Residues 286–635 (LEDFSMSPGD…EEEKSLNIDA (350 aa)) form a seven-bladed beta propeller region. The C-1 stretch occupies residues 641–712 (NVKEDFAEMY…RTSHSYEMGG (72 aa)). His-706 functions as the Charge relay system in the catalytic mechanism. Residues 721-816 (RAGRIACDFK…SGFVDVLQDD (96 aa)) are PDZ-like. A C-2 region spans residues 817–1022 (RYIRYRAWVE…IEMVLADLEK (206 aa)). 877-879 (GGG) contacts substrate. Catalysis depends on Ser-926, which acts as the Nucleophile. 954 to 956 (GIS) lines the substrate pocket. Glu-984 acts as the Charge relay system in catalysis.

It belongs to the peptidase S41B family. In terms of assembly, part of the tricorn proteolytic complex.

The protein resides in the cytoplasm. Functionally, tricorn degrades oligopeptides in a sequential manner. The protein is Tricorn protease (tri) of Thermoplasma volcanium (strain ATCC 51530 / DSM 4299 / JCM 9571 / NBRC 15438 / GSS1).